We begin with the raw amino-acid sequence, 163 residues long: Nucleotide-binding protein YajQ (163 aa).

This sequence belongs to the YajQ family.

Its function is as follows. Nucleotide-binding protein. This Escherichia coli (strain K12 / DH10B) protein is Nucleotide-binding protein YajQ.